The following is a 286-amino-acid chain: MTRPPNISEDVRLRLDIAYDGTDFAGWAVQAGQRTVAGLDEAFTTVFRTPVRLRAAGRTDTGVHATGQVAHVDIPGTALSKANPRSPHTGDPEFLPLLRRLSRLLPVDVRVLDIACAPVGFDARFSALRRHYRYRLSTAPYGVQPNQARYVTAWPRELDLDSMSAASRDLLGLRDFAVFCRHRHGATTIRELQRLEWSREGYLITAHITADAFCWSMVRSLIGALLAVGDHRRTIGWCGELLTKASRSSDFTTAPAHGLTFIRVDYPPDDELAERAVITRDLRSSF.

The active-site Nucleophile is D60. Position 132 (Y132) interacts with substrate.

Belongs to the tRNA pseudouridine synthase TruA family. Homodimer.

It catalyses the reaction uridine(38/39/40) in tRNA = pseudouridine(38/39/40) in tRNA. Its function is as follows. Formation of pseudouridine at positions 38, 39 and 40 in the anticodon stem and loop of transfer RNAs. The chain is tRNA pseudouridine synthase A from Mycobacterium leprae (strain TN).